A 289-amino-acid chain; its full sequence is 33 kDa chaperonin (289 aa).

2 cysteine pairs are disulfide-bonded: Cys-235–Cys-237 and Cys-268–Cys-271.

It belongs to the HSP33 family. Under oxidizing conditions two disulfide bonds are formed involving the reactive cysteines. Under reducing conditions zinc is bound to the reactive cysteines and the protein is inactive.

The protein resides in the cytoplasm. Its function is as follows. Redox regulated molecular chaperone. Protects both thermally unfolding and oxidatively damaged proteins from irreversible aggregation. Plays an important role in the bacterial defense system toward oxidative stress. In Bacillus licheniformis (strain ATCC 14580 / DSM 13 / JCM 2505 / CCUG 7422 / NBRC 12200 / NCIMB 9375 / NCTC 10341 / NRRL NRS-1264 / Gibson 46), this protein is 33 kDa chaperonin.